A 203-amino-acid chain; its full sequence is Imidazoleglycerol-phosphate dehydratase (203 aa).

It belongs to the imidazoleglycerol-phosphate dehydratase family.

The protein localises to the cytoplasm. The enzyme catalyses D-erythro-1-(imidazol-4-yl)glycerol 3-phosphate = 3-(imidazol-4-yl)-2-oxopropyl phosphate + H2O. It participates in amino-acid biosynthesis; L-histidine biosynthesis; L-histidine from 5-phospho-alpha-D-ribose 1-diphosphate: step 6/9. In Salinispora arenicola (strain CNS-205), this protein is Imidazoleglycerol-phosphate dehydratase.